The following is a 328-amino-acid chain: Fructose-1,6-bisphosphatase class 1 (328 aa).

The Mg(2+) site is built by glutamate 89, aspartate 110, leucine 112, and aspartate 113. Residues asparagine 206, tyrosine 234, 252 to 254 (YLY), and lysine 264 contribute to the substrate site. Glutamate 270 provides a ligand contact to Mg(2+).

Belongs to the FBPase class 1 family. Homotetramer. The cofactor is Mg(2+).

Its subcellular location is the cytoplasm. It carries out the reaction beta-D-fructose 1,6-bisphosphate + H2O = beta-D-fructose 6-phosphate + phosphate. It functions in the pathway carbohydrate biosynthesis; gluconeogenesis. The sequence is that of Fructose-1,6-bisphosphatase class 1 from Wigglesworthia glossinidia brevipalpis.